Reading from the N-terminus, the 406-residue chain is MKIQLRDIFEPLSANHMAKVDLWFVMSLIAILALGIVMVASASISVSESIHNTPYFFMGRQILYLILGVSFGFMMLQIPTQNLQKWGILLMLLSLVLLVLVLVPGIGKTVNGSRRWINLIVFNLQASEVAKVCMVVYVSGYLVRRAERVRENLIGFALPLFLTSLFLIFLLMEPDFGASVVLIGTVIALLFIGGAPVYQFIAIVIMAVLVMAGLALSESYRVKRLMNFVDPWADPFNDGYQLSQALIAYGRGEWFGLGLGNSVQKLSYLPEAHTDFVFSIWVEEMGLLGGVVLLSLFALMLSRIFKIGHRALMGARPFAGYMCFGFAILILAQVIINVGVNTGFLPTKGLTLPLISYGGSSLIITLGSLFVVARVDIENKLASKGGESEERKRKSDESIDDGEALA.

9 consecutive transmembrane segments (helical) span residues 22–42 (LWFV…VASA), 56–76 (FFMG…FMML), 86–106 (WGIL…VPGI), 116–136 (WINL…CMVV), 153–173 (LIGF…LLME), 186–206 (VIAL…IVIM), 280–300 (IWVE…FALM), 318–338 (FAGY…IINV), and 352–372 (LPLI…LFVV). Basic and acidic residues predominate over residues 383–397 (SKGGESEERKRKSDE). Positions 383 to 406 (SKGGESEERKRKSDESIDDGEALA) are disordered.

It belongs to the SEDS family. FtsW subfamily.

The protein resides in the cell inner membrane. It carries out the reaction [GlcNAc-(1-&gt;4)-Mur2Ac(oyl-L-Ala-gamma-D-Glu-L-Lys-D-Ala-D-Ala)](n)-di-trans,octa-cis-undecaprenyl diphosphate + beta-D-GlcNAc-(1-&gt;4)-Mur2Ac(oyl-L-Ala-gamma-D-Glu-L-Lys-D-Ala-D-Ala)-di-trans,octa-cis-undecaprenyl diphosphate = [GlcNAc-(1-&gt;4)-Mur2Ac(oyl-L-Ala-gamma-D-Glu-L-Lys-D-Ala-D-Ala)](n+1)-di-trans,octa-cis-undecaprenyl diphosphate + di-trans,octa-cis-undecaprenyl diphosphate + H(+). It participates in cell wall biogenesis; peptidoglycan biosynthesis. Peptidoglycan polymerase that is essential for cell division. This Marinomonas mediterranea (strain ATCC 700492 / JCM 21426 / NBRC 103028 / MMB-1) protein is Probable peptidoglycan glycosyltransferase FtsW.